The chain runs to 105 residues: Circadian clock oscillator protein KaiB1 (105 aa).

This sequence belongs to the KaiB family. As to quaternary structure, homotetramer in solution and crystals formed by 2 dimers. Only elutes as a homotetramer in size exclusion chromatography, interacts with KaiC1 and KaiC3. The KaiABC complex composition changes during the circadian cycle to control KaiC phosphorylation. Complexes KaiC(6), KaiA(2-4):KaiC(6), KaiB(6):KaiC(6) and KaiC(6):KaiB(6):KaiA(12) are among the most important forms, many form cooperatively. Undergoes a major conformational rearrangment; in the free state forms homotetramers as a dimer of dimers. When bound to the CI domain of KaiC switches to a monomeric thioredoxin-fold (KaiB(fs)). KaiB(fs) binds CikA, leading it to dephosphorylate phospho-RpaA.

In terms of biological role, key component of the KaiABC oscillator complex, which constitutes the main circadian regulator in cyanobacteria. Complex composition changes during the circadian cycle to control KaiC phosphorylation. KaiA stimulates KaiC autophosphorylation, while KaiB sequesters KaiA, leading to KaiC autodephosphorylation. Phospho-Ser-431 KaiC accumulation triggers binding of KaiB to form the KaiB(6):KaiC(6) complex, leading to changes in output regulators CikA and SasA. KaiB switches to a thioredoxin-like fold (KaiB(fs)) when bound to KaiC. KaiB(6):KaiC(6) formation exposes a site for KaiA binding that sequesters KaiA from KaiC, making the KaiC(6):KaiB(6):KaiA(12) complex that results in KaiC autodephosphorylation. Component of the oscillator and circadian clock in this organism, enhances fitness in a rhythmic environment. The homotetramer reduces the ATPase activity of KaiC3 by 35%. Its function is as follows. A metamorphic protein which reversibly switches between an inactive tetrameric fold and a rare, thioredoxin-like monomeric fold (KaiB(fs)). KaiB(fs) binds phospho-KaiC, KaiA and CikA. KaiA and CikA compete for binding to KaiB(fs), and KaiB(fs) and SasA compete for binding to KaiC, thus the clock oscillator and output signal pathway are tightly coupled. The protein is Circadian clock oscillator protein KaiB1 of Synechocystis sp. (strain ATCC 27184 / PCC 6803 / Kazusa).